A 245-amino-acid chain; its full sequence is Aquaporin SIP1-1 (245 aa).

Transmembrane regions (helical) follow at residues 14 to 34 and 55 to 75; these read AVVT…TAAV and LLSV…GASF. The NPA 1 signature appears at 76 to 78; the sequence is NPT. 3 helical membrane passes run 100–120, 138–158, and 164–184; these read FPAQ…LMPA, GALA…WVIV, and VILK…AGAE. Residues 191–193 carry the NPA 2 motif; that stretch reads NPA. Residues 213 to 233 form a helical membrane-spanning segment; sequence VYWICPFIGAMLAGWIFRVVF.

It belongs to the MIP/aquaporin (TC 1.A.8) family. SIP (TC 1.A.8.10) subfamily.

The protein resides in the membrane. In terms of biological role, aquaporins facilitate the transport of water and small neutral solutes across cell membranes. The protein is Aquaporin SIP1-1 (SIP1-1) of Zea mays (Maize).